Here is a 260-residue protein sequence, read N- to C-terminus: Hydroxyacylglutathione hydrolase (260 aa).

Positions 55, 57, 59, 60, 116, 133, and 171 each coordinate Zn(2+).

This sequence belongs to the metallo-beta-lactamase superfamily. Glyoxalase II family. Monomer. It depends on Zn(2+) as a cofactor.

It catalyses the reaction an S-(2-hydroxyacyl)glutathione + H2O = a 2-hydroxy carboxylate + glutathione + H(+). It participates in secondary metabolite metabolism; methylglyoxal degradation; (R)-lactate from methylglyoxal: step 2/2. Thiolesterase that catalyzes the hydrolysis of S-D-lactoyl-glutathione to form glutathione and D-lactic acid. In Shewanella loihica (strain ATCC BAA-1088 / PV-4), this protein is Hydroxyacylglutathione hydrolase.